A 445-amino-acid polypeptide reads, in one-letter code: Phosphoglucosamine mutase (445 aa).

The Phosphoserine intermediate role is filled by Ser-102. 4 residues coordinate Mg(2+): Ser-102, Asp-241, Asp-243, and Asp-245. At Ser-102 the chain carries Phosphoserine.

Belongs to the phosphohexose mutase family. Mg(2+) serves as cofactor. Post-translationally, activated by phosphorylation.

The catalysed reaction is alpha-D-glucosamine 1-phosphate = D-glucosamine 6-phosphate. Catalyzes the conversion of glucosamine-6-phosphate to glucosamine-1-phosphate. The chain is Phosphoglucosamine mutase from Acinetobacter baumannii (strain AB0057).